We begin with the raw amino-acid sequence, 261 residues long: Cytochrome c oxidase subunit 3 (261 aa).

Residues 1 to 15 (MTHQLHQYHLVDPSP) are Mitochondrial matrix-facing. A helical membrane pass occupies residues 16–34 (WPLTGAMGSLLLASGLAVW). Residues 35–40 (FHTNNT) are Mitochondrial intermembrane-facing. The helical transmembrane segment at 41–66 (MLLKFGLLTLLLTMFQWWRDIIREST) threads the bilayer. Topologically, residues 67 to 72 (YQGHHT) are mitochondrial matrix. The helical transmembrane segment at 73 to 105 (SGVQKNMRYGMILFITSEVFFFLGFFWALYHVS) threads the bilayer. Residues 106 to 128 (LVPTPELGAEWPPIGITPLNPME) lie on the Mitochondrial intermembrane side of the membrane. A helical transmembrane segment spans residues 129 to 152 (VPLLNTAVLLSSGATITWSHHTMM). Residues 153-155 (KGN) are Mitochondrial matrix-facing. Residues 156 to 183 (KKEATHALMLTIILGAYFTALQLSEYME) traverse the membrane as a helical segment. Residues 184-190 (TPFTIAD) are Mitochondrial intermembrane-facing. The helical transmembrane segment at 191–223 (SVYGSLFFVATGFHGLHVMIGTSFLMVCALRLA) threads the bilayer. The Mitochondrial matrix segment spans residues 224 to 232 (KHHFTITHH). The chain crosses the membrane as a helical span at residues 233 to 256 (FGYEAAIWYWHFVDIVWLFLYISV). At 257-261 (YWWGS) the chain is on the mitochondrial intermembrane side.

It belongs to the cytochrome c oxidase subunit 3 family. As to quaternary structure, component of the cytochrome c oxidase (complex IV, CIV), a multisubunit enzyme composed of 14 subunits. The complex is composed of a catalytic core of 3 subunits MT-CO1, MT-CO2 and MT-CO3, encoded in the mitochondrial DNA, and 11 supernumerary subunits COX4I, COX5A, COX5B, COX6A, COX6B, COX6C, COX7A, COX7B, COX7C, COX8 and NDUFA4, which are encoded in the nuclear genome. The complex exists as a monomer or a dimer and forms supercomplexes (SCs) in the inner mitochondrial membrane with NADH-ubiquinone oxidoreductase (complex I, CI) and ubiquinol-cytochrome c oxidoreductase (cytochrome b-c1 complex, complex III, CIII), resulting in different assemblies (supercomplex SCI(1)III(2)IV(1) and megacomplex MCI(2)III(2)IV(2)).

It is found in the mitochondrion inner membrane. It carries out the reaction 4 Fe(II)-[cytochrome c] + O2 + 8 H(+)(in) = 4 Fe(III)-[cytochrome c] + 2 H2O + 4 H(+)(out). In terms of biological role, component of the cytochrome c oxidase, the last enzyme in the mitochondrial electron transport chain which drives oxidative phosphorylation. The respiratory chain contains 3 multisubunit complexes succinate dehydrogenase (complex II, CII), ubiquinol-cytochrome c oxidoreductase (cytochrome b-c1 complex, complex III, CIII) and cytochrome c oxidase (complex IV, CIV), that cooperate to transfer electrons derived from NADH and succinate to molecular oxygen, creating an electrochemical gradient over the inner membrane that drives transmembrane transport and the ATP synthase. Cytochrome c oxidase is the component of the respiratory chain that catalyzes the reduction of oxygen to water. Electrons originating from reduced cytochrome c in the intermembrane space (IMS) are transferred via the dinuclear copper A center (CU(A)) of subunit 2 and heme A of subunit 1 to the active site in subunit 1, a binuclear center (BNC) formed by heme A3 and copper B (CU(B)). The BNC reduces molecular oxygen to 2 water molecules using 4 electrons from cytochrome c in the IMS and 4 protons from the mitochondrial matrix. This chain is Cytochrome c oxidase subunit 3 (MT-CO3), found in Lycodon semicarinatus (Ryukyu odd-tooth snake).